The chain runs to 162 residues: Caveolin-2 (162 aa).

The Cytoplasmic segment spans residues 1–86 (MGLETEKADV…FEISKYVMYK (86 aa)). At Y19 the chain carries Phosphotyrosine; by SRC. A phosphoserine mark is found at S20 and S23. Y27 is modified (phosphotyrosine; by SRC). S36 bears the Phosphoserine mark. The segment at residues 87–107 (FLTVFLAIPLAFLAGILFATL) is an intramembrane region (helical). Residues 108–162 (SCLHIWIIMPFVKTCLMVLPSVQTIWKSVTDAIIAPLCTSIGRSFSSVSLQLSQD) lie on the Cytoplasmic side of the membrane.

Belongs to the caveolin family. As to quaternary structure, monomer or homodimer. Interacts with CAV1; the interaction forms a stable heterooligomeric complex that is required for targeting to lipid rafts and for caveolae formation. Tyrosine phosphorylated forms do not form heterooligomers with the Tyr-19-phosphorylated form existing as a monomer or dimer, and the Tyr-27-form as a monomer only. Interacts (tyrosine phosphorylated form) with the SH2 domain-containing proteins, RASA1, NCK1 and SRC. Interacts (tyrosine phosphorylated form) with INSR, the interaction (Tyr-27-phosphorylated form) is increased on insulin stimulation. Interacts (Tyr-19 phosphorylated form) with MAPK1 (phosphorylated form); the interaction, promoted by insulin, leads to nuclear location and MAPK1 activation. Interacts with STAT3; the interaction is increased on insulin-induced tyrosine phosphorylation leading to STAT activation. Phosphorylated on serine and tyrosine residues. CAV1 promotes phosphorylation on Ser-23 which then targets the complex to the plasma membrane, lipid rafts and caveolae. Phosphorylation on Ser-36 appears to modulate mitosis in endothelial cells. Phosphorylation on both Tyr-19 and Tyr-27 is required for insulin-induced 'Ser-727' phosphorylation of STAT3 and its activation. Phosphorylation on Tyr-19 is required for insulin-induced phosphorylation of MAPK1 and DNA binding of STAT3. Tyrosine phosphorylation is induced by both EGF and insulin (By. similarity).

It is found in the nucleus. The protein resides in the cytoplasm. Its subcellular location is the golgi apparatus membrane. It localises to the cell membrane. The protein localises to the membrane. It is found in the caveola. In terms of biological role, may act as a scaffolding protein within caveolar membranes. Interacts directly with G-protein alpha subunits and can functionally regulate their activity. Acts as an accessory protein in conjunction with CAV1 in targeting to lipid rafts and driving caveolae formation. The Ser-36 phosphorylated form has a role in modulating mitosis in endothelial cells. Positive regulator of cellular mitogenesis of the MAPK signaling pathway. Required for the insulin-stimulated nuclear translocation and activation of MAPK1 and STAT3, and the subsequent regulation of cell cycle progression. The sequence is that of Caveolin-2 (CAV2) from Plecturocebus moloch (Dusky titi monkey).